A 396-amino-acid polypeptide reads, in one-letter code: Glideosome-associated protein 50 (396 aa).

Over M1–R369 the chain is Lumenal. Positions 195 and 256 each coordinate a metal cation. Residues V370 to F390 traverse the membrane as a helical segment. Residues L391–K396 are Cytoplasmic-facing.

This sequence belongs to the metallophosphoesterase superfamily. Purple acid phosphatase family. As to quaternary structure, component of the glideosome complex composed of GAP50, GAP45, MTIP and MyoA; the complex is formed during the late schizont stage and in merozoites. MyoA, MTIP and GAP45 probably form an initial complex in the cytoplasm which is then recruited to the outer face of the inner membrane complex via the interaction with GAP50. Interacts with GAP45; the interaction is independent of GAP45 phosphorylation status and can also occur independently of the formation of the glideosome complex. Interacts with human factor H isoform CFH (via sushi 6-7 domains) and isoform FHL-1 (via sushi 6-7 domains); the interaction occurs in the vector mosquito midgut at the surface of activated gametocytes; the interaction protects the parasite from alternative complement pathway-mediated elimination. Requires a metal cation as cofactor. The N-terminus signal is likely to be cleaved.

The protein resides in the inner membrane complex. It localises to the cell membrane. The protein localises to the endoplasmic reticulum membrane. The enzyme catalyses a phosphate monoester + H2O = an alcohol + phosphate. With respect to regulation, activity is independent of metal ions. Functionally, component of the glideosome complex, an inner membrane complex structure involved in parasite gliding motility and host cell invasion. During the asexual blood stage, may play a role in the assembly and anchoring of the glideosome complex to the inner membrane complex. During the sexual stage in the vector mosquito midgut, protects gametocytes against host alternative complement pathway-mediated elimination by interacting with host complement inhibitor factor H. Has phosphatase activity towards nucleotides such as ATP, vitamins B1 and B6, phosphorylated sugars, glycerol phosphates and inositol triphosphates. However, the phosphatase activity is controversial. This is Glideosome-associated protein 50 from Plasmodium falciparum (isolate 3D7).